The sequence spans 332 residues: tRNA dimethylallyltransferase 2 (332 aa).

An ATP-binding site is contributed by 15–22 (GPTASGKT). A substrate-binding site is contributed by 17–22 (TASGKT). Interaction with substrate tRNA regions lie at residues 40 to 43 (DSVM) and 164 to 168 (QRIQR).

This sequence belongs to the IPP transferase family. As to quaternary structure, monomer. It depends on Mg(2+) as a cofactor.

The enzyme catalyses adenosine(37) in tRNA + dimethylallyl diphosphate = N(6)-dimethylallyladenosine(37) in tRNA + diphosphate. In terms of biological role, catalyzes the transfer of a dimethylallyl group onto the adenine at position 37 in tRNAs that read codons beginning with uridine, leading to the formation of N6-(dimethylallyl)adenosine (i(6)A). The polypeptide is tRNA dimethylallyltransferase 2 (Hahella chejuensis (strain KCTC 2396)).